A 700-amino-acid chain; its full sequence is uncharacterized protein (700 aa).

Cysteine 307, cysteine 310, cysteine 314, and cysteine 558 together coordinate [4Fe-4S] cluster.

It belongs to the AOR/FOR family. [4Fe-4S] cluster serves as cofactor. It depends on Mo-molybdopterin as a cofactor. Tungstopterin is required as a cofactor.

This is an uncharacterized protein from Escherichia coli (strain K12).